The chain runs to 309 residues: Taste receptor type 2 member 8 (309 aa).

The Extracellular portion of the chain corresponds to 1–7 (MFSPADN). A helical transmembrane segment spans residues 8 to 28 (IFIILITGEFIIGILGNGYIG). At 29–50 (LVNWIDWIKKKKISTIDCILTN) the chain is on the cytoplasmic side. The chain crosses the membrane as a helical span at residues 51–71 (LVISRICLISVMVVNGIVIVL). The Extracellular portion of the chain corresponds to 72-82 (YPDVYTKTKLQ). The chain crosses the membrane as a helical span at residues 83–103 (IVICTFWTFANYLNMWFTACL). At 104-131 (NVFYSLKVANSSHPLFLWLKRKIDMVVR) the chain is on the cytoplasmic side. A helical membrane pass occupies residues 132–152 (WILLGCFAISLLVSLIIATVL). The Extracellular portion of the chain corresponds to 153-184 (SHDYRFHAIAKHKRNVTEMFHVSKMPYFEPLT). Residue Asn-167 is glycosylated (N-linked (GlcNAc...) asparagine). A helical membrane pass occupies residues 185–205 (LFNLLAIVPFIVSLMSFFLLV). At 206–239 (RSLWRHTKQIKLYATGGRDPSTEAHVRAIKTMTL) the chain is on the cytoplasmic side. A helical membrane pass occupies residues 240–260 (LIFFFFLYYITSLLVXFSYLI). Topologically, residues 261–266 (TNYKLA) are extracellular. Residues 267-287 (MAFGEIVAILYPSGHSLILII) form a helical membrane-spanning segment. At 288-309 (LNNKLRQASVRMLTCRKIACVT) the chain is on the cytoplasmic side.

The protein belongs to the G-protein coupled receptor T2R family.

The protein localises to the membrane. In terms of biological role, receptor that may play a role in the perception of bitterness and is gustducin-linked. May play a role in sensing the chemical composition of the gastrointestinal content. The activity of this receptor may stimulate alpha gustducin, mediate PLC-beta-2 activation and lead to the gating of TRPM5. The polypeptide is Taste receptor type 2 member 8 (TAS2R8) (Papio hamadryas (Hamadryas baboon)).